The following is a 290-amino-acid chain: 33 kDa chaperonin (290 aa).

Disulfide bonds link C235–C237 and C268–C271.

This sequence belongs to the HSP33 family. In terms of processing, under oxidizing conditions two disulfide bonds are formed involving the reactive cysteines. Under reducing conditions zinc is bound to the reactive cysteines and the protein is inactive.

It is found in the cytoplasm. Redox regulated molecular chaperone. Protects both thermally unfolding and oxidatively damaged proteins from irreversible aggregation. Plays an important role in the bacterial defense system toward oxidative stress. This is 33 kDa chaperonin from Streptococcus pyogenes serotype M5 (strain Manfredo).